The sequence spans 617 residues: uncharacterized protein (617 aa).

Residues 33–134 form the B12-binding N-terminal domain; sequence TEDDFRGEKF…FXNATKQKGS (102 aa). Methylcob(III)alamin-binding positions include Glu-84, 146–150, His-149, Ser-194, Thr-198, and Ala-251; that span reads GDVHD. The region spanning 136–272 is the B12-binding domain; the sequence is NGKVVIATVK…NPEGRAALWE (137 aa). Residues 288-617 form the AdoMet activation domain; the sequence is SKPLRKQLSI…MMKWLGVAMK (330 aa). S-adenosyl-L-methionine contacts are provided by residues Asp-337, Arg-528, and 583-584; that span reads YF.

This sequence belongs to the vitamin-B12 dependent methionine synthase family.

This is an uncharacterized protein from Haemophilus influenzae (strain ATCC 51907 / DSM 11121 / KW20 / Rd).